We begin with the raw amino-acid sequence, 523 residues long: Sucrose 6(F)-phosphate phosphorylase (523 aa).

Sucrose 6(F)-phosphate-binding positions include Asp58, His96, 221 to 223 (RLD), Glu264, 326 to 327 (HD), and Lys434. The active-site Nucleophile is Asp223. The Proton donor/acceptor role is filled by Glu264.

The protein belongs to the glycosyl hydrolase 13 family. Sucrose phosphorylase subfamily. Monomer.

The enzyme catalyses sucrose 6(F)-phosphate + phosphate = beta-D-fructose 6-phosphate + alpha-D-glucose 1-phosphate. Catalyzes the reversible phosphorolysis of sucrose 6(F)-phosphate into alpha-D-glucose 1-phosphate (Glc1P) and D-fructose 6-phosphate. May be involved in a new pathway for the degradation of sucrose, which could become phosphorylated on its fructose moiety during uptake via a PTS system. Shows strict specificity since it does not catalyze reactions with alternative substrates. This Ilumatobacter coccineus (strain NBRC 103263 / KCTC 29153 / YM16-304) protein is Sucrose 6(F)-phosphate phosphorylase.